The primary structure comprises 111 residues: Cell division protein FtsB (111 aa).

Topologically, residues 1–3 are cytoplasmic; the sequence is MGK. A helical transmembrane segment spans residues 4-21; sequence LTLLLLILLGWLQYSLWL. Residues 22–111 lie on the Periplasmic side of the membrane; the sequence is GKNGIHDYVR…TNTSSNNTQR (90 aa). Positions 33-63 form a coiled coil; it reads KDDVVVQQGNNAKLKDRNEQLFAEIDDLNGG. The tract at residues 88-111 is disordered; sequence VPESNHRNANTPSSTNTSSNNTQR. A compositionally biased stretch (low complexity) spans 97-111; that stretch reads NTPSSTNTSSNNTQR.

Belongs to the FtsB family. Part of a complex composed of FtsB, FtsL and FtsQ.

It localises to the cell inner membrane. Essential cell division protein. May link together the upstream cell division proteins, which are predominantly cytoplasmic, with the downstream cell division proteins, which are predominantly periplasmic. The chain is Cell division protein FtsB from Pectobacterium atrosepticum (strain SCRI 1043 / ATCC BAA-672) (Erwinia carotovora subsp. atroseptica).